Consider the following 921-residue polypeptide: Isoleucine--tRNA ligase (921 aa).

The short motif at 57–67 is the 'HIGH' region element; it reads PYANGNIHVGT. E551 provides a ligand contact to L-isoleucyl-5'-AMP. The 'KMSKS' region signature appears at 592–596; that stretch reads KMSKS. Residue K595 participates in ATP binding. 4 residues coordinate Zn(2+): C885, C888, C905, and C908.

The protein belongs to the class-I aminoacyl-tRNA synthetase family. IleS type 1 subfamily. In terms of assembly, monomer. Zn(2+) is required as a cofactor.

The protein resides in the cytoplasm. It carries out the reaction tRNA(Ile) + L-isoleucine + ATP = L-isoleucyl-tRNA(Ile) + AMP + diphosphate. Functionally, catalyzes the attachment of isoleucine to tRNA(Ile). As IleRS can inadvertently accommodate and process structurally similar amino acids such as valine, to avoid such errors it has two additional distinct tRNA(Ile)-dependent editing activities. One activity is designated as 'pretransfer' editing and involves the hydrolysis of activated Val-AMP. The other activity is designated 'posttransfer' editing and involves deacylation of mischarged Val-tRNA(Ile). This Kosmotoga olearia (strain ATCC BAA-1733 / DSM 21960 / TBF 19.5.1) protein is Isoleucine--tRNA ligase.